We begin with the raw amino-acid sequence, 1088 residues long: RNA-directed RNA polymerase (1088 aa).

Residues L501–I687 enclose the RdRp catalytic domain.

Belongs to the reoviridae RNA-directed RNA polymerase family. As to quaternary structure, interacts with VP3 (Potential). Interacts with VP2; this interaction activates VP1. Interacts with NSP5; this interaction is probably necessary for the formation of functional virus factories. Interacts with NSP2; this interaction is weak. Requires Mg(2+) as cofactor.

The protein localises to the virion. The enzyme catalyses RNA(n) + a ribonucleoside 5'-triphosphate = RNA(n+1) + diphosphate. RNA-directed RNA polymerase that is involved in both transcription and genome replication. Together with VP3 capping enzyme, forms an enzyme complex positioned near the channels situated at each of the five-fold vertices of the core. Following infection, the outermost layer of the virus is lost, leaving a double-layered particle (DLP) made up of the core and VP6 shell. VP1 then catalyzes the transcription of fully conservative plus-strand genomic RNAs that are extruded through the DLP's channels into the cytoplasm where they function as mRNAs for translation of viral proteins. One copy of each of the viral (+)RNAs is also recruited during core assembly, together with newly synthesized polymerase complexes and VP2. The polymerase of these novo-formed particles catalyzes the synthesis of complementary minus-strands leading to dsRNA formation. To do so, the polymerase specifically recognizes and binds 4 bases 5'-UGUG-3' in the conserved 3'-sequence of plus-strand RNA templates. VP2 presumably activates the autoinhibited VP1-RNA complex to coordinate packaging and genome replication. Once dsRNA synthesis is complete, the polymerase switches to the transcriptional mode, thus providing secondary transcription. The chain is RNA-directed RNA polymerase from Homo sapiens (Human).